The primary structure comprises 204 residues: Kunitz type trypsin inhibitor 106 (204 aa).

Positions 1-26 (MSMRLSIRTLIILAHVCLFITTTTIA) are cleaved as a signal peptide. Residue N62 is glycosylated (N-linked (GlcNAc...) asparagine). C65 and C112 are disulfide-bonded. N141 is a glycosylation site (N-linked (GlcNAc...) asparagine). 2 disulfides stabilise this stretch: C164–C176 and C169–C172.

Belongs to the protease inhibitor I3 (leguminous Kunitz-type inhibitor) family. Interacts with SCP1 and CP. As to expression, expressed at low levels in non-mycorrhizal roots.

It localises to the secreted. The protein resides in the extracellular space. Its subcellular location is the apoplast. Protease inhibitor that, together with SCP1, controls mycorrhiza establishment and arbuscule development during root colonization by arbuscular mycorrhizal (AM) fungi (e.g. Rhizophagus irregularis), probably by degrading SCP1 in the apoplast of the periarbuscular region. This Medicago truncatula (Barrel medic) protein is Kunitz type trypsin inhibitor 106.